The sequence spans 242 residues: Small ribosomal subunit protein uS2 (242 aa).

This sequence belongs to the universal ribosomal protein uS2 family.

The polypeptide is Small ribosomal subunit protein uS2 (Neisseria meningitidis serogroup C (strain 053442)).